The following is a 139-amino-acid chain: Putative nickel-responsive regulator (139 aa).

4 residues coordinate Ni(2+): His-79, His-90, His-92, and Cys-98.

Belongs to the transcriptional regulatory CopG/NikR family. Requires Ni(2+) as cofactor.

Transcriptional regulator. In Trichlorobacter lovleyi (strain ATCC BAA-1151 / DSM 17278 / SZ) (Geobacter lovleyi), this protein is Putative nickel-responsive regulator.